The primary structure comprises 94 residues: Scorpine-like-1 (94 aa).

The signal sequence occupies residues 1–18; that stretch reads MNTKFTVLIFLGVIVVSY. The BetaSPN-type CS-alpha/beta domain maps to 54 to 94; the sequence is EYGCMMDISWNKDCQRHCQSTEQKDGICHGMKCKCGKPRSY. 3 disulfide bridges follow: Cys57–Cys81, Cys67–Cys86, and Cys71–Cys88.

The protein belongs to the long chain scorpion toxin family. Class 3 subfamily. As to expression, expressed by the venom gland.

It localises to the secreted. In terms of biological role, has antibacterial activity. The polypeptide is Scorpine-like-1 (Urodacus yaschenkoi (Inland robust scorpion)).